The following is a 603-amino-acid chain: DNA ligase (603 aa).

ATP is bound at residue Glu262. The active-site N6-AMP-lysine intermediate is Lys264. Positions 269, 285, 315, 355, 432, and 438 each coordinate ATP.

The protein belongs to the ATP-dependent DNA ligase family. The cofactor is Mg(2+).

It catalyses the reaction ATP + (deoxyribonucleotide)n-3'-hydroxyl + 5'-phospho-(deoxyribonucleotide)m = (deoxyribonucleotide)n+m + AMP + diphosphate.. In terms of biological role, DNA ligase that seals nicks in double-stranded DNA during DNA replication, DNA recombination and DNA repair. In Caldivirga maquilingensis (strain ATCC 700844 / DSM 13496 / JCM 10307 / IC-167), this protein is DNA ligase.